The primary structure comprises 215 residues: Adenylate kinase (215 aa).

10–15 provides a ligand contact to ATP; sequence GAGKGT. The segment at 30-59 is NMP; that stretch reads STGDMLRAAIKAGTPLGLEAKKIIDEGGLV. AMP-binding positions include threonine 31, arginine 36, 57–59, 85–88, and glutamine 92; these read GLV and GFPR. The segment at 122 to 159 is LID; it reads GRRVHLASGRTYHVTYNPPKVEGKDDVTGEDLIQRDDD. ATP is bound by residues arginine 123 and 132 to 133; that span reads TY. Residues arginine 156 and arginine 167 each coordinate AMP. An ATP-binding site is contributed by glutamine 200.

It belongs to the adenylate kinase family. Monomer.

The protein resides in the cytoplasm. The enzyme catalyses AMP + ATP = 2 ADP. It functions in the pathway purine metabolism; AMP biosynthesis via salvage pathway; AMP from ADP: step 1/1. Functionally, catalyzes the reversible transfer of the terminal phosphate group between ATP and AMP. Plays an important role in cellular energy homeostasis and in adenine nucleotide metabolism. The protein is Adenylate kinase of Neisseria meningitidis serogroup C (strain 053442).